The following is a 438-amino-acid chain: 3-phosphoshikimate 1-carboxyvinyltransferase (438 aa).

Residues K20, S21, and R25 each contribute to the 3-phosphoshikimate site. Residue K20 coordinates phosphoenolpyruvate. Phosphoenolpyruvate is bound by residues G90 and R118. 3-phosphoshikimate is bound by residues S163, S164, Q165, S191, D320, and K347. Residue Q165 participates in phosphoenolpyruvate binding. D320 (proton acceptor) is an active-site residue. Phosphoenolpyruvate-binding residues include R351 and R392.

It belongs to the EPSP synthase family. Monomer.

The protein localises to the cytoplasm. The catalysed reaction is 3-phosphoshikimate + phosphoenolpyruvate = 5-O-(1-carboxyvinyl)-3-phosphoshikimate + phosphate. It functions in the pathway metabolic intermediate biosynthesis; chorismate biosynthesis. Its function is as follows. Catalyzes the transfer of the enolpyruvyl moiety of phosphoenolpyruvate (PEP) to the 5-hydroxyl of shikimate-3-phosphate (S3P) to produce enolpyruvyl shikimate-3-phosphate and inorganic phosphate. The protein is 3-phosphoshikimate 1-carboxyvinyltransferase of Natronomonas pharaonis (strain ATCC 35678 / DSM 2160 / CIP 103997 / JCM 8858 / NBRC 14720 / NCIMB 2260 / Gabara) (Halobacterium pharaonis).